Reading from the N-terminus, the 159-residue chain is Mesogenin-1 (159 aa).

The disordered stretch occupies residues 79-101; that stretch reads PGQARLPKGTKVRMSAQRRRKAS. Positions 86-100 are enriched in basic residues; that stretch reads KGTKVRMSAQRRRKA. The bHLH domain occupies 95 to 149; it reads QRRRKASEREKLRMRTLADALHTLRNYLPPAYSQRGQPLTKIQTLKCTIKYISEL.

The protein localises to the nucleus. Involved in specifying the paraxial, but not dorsal, mesoderm. May regulate the expression of T-box transcription factors required for mesoderm formation and differentiation. The sequence is that of Mesogenin-1 (MSGN1) from Gallus gallus (Chicken).